A 383-amino-acid polypeptide reads, in one-letter code: Putative glutamate--cysteine ligase 2-2 (383 aa).

The protein belongs to the glutamate--cysteine ligase type 2 family. YbdK subfamily.

The catalysed reaction is L-cysteine + L-glutamate + ATP = gamma-L-glutamyl-L-cysteine + ADP + phosphate + H(+). Functionally, ATP-dependent carboxylate-amine ligase which exhibits weak glutamate--cysteine ligase activity. The chain is Putative glutamate--cysteine ligase 2-2 from Legionella pneumophila (strain Lens).